The primary structure comprises 318 residues: Protoheme IX farnesyltransferase (318 aa).

9 helical membrane passes run 29–49, 51–71, 102–122, 123–143, 151–171, 179–199, 219–239, 241–261, and 280–300; these read IIPL…QGQV, PVLL…AQTI, LIFA…FANL, LAAS…THWL, IVIG…AVTG, LIFA…ALMI, ATVK…LLLV, PLHA…AVFI, and LFLY…VDSL.

The protein belongs to the UbiA prenyltransferase family. Protoheme IX farnesyltransferase subfamily.

It localises to the cell inner membrane. The enzyme catalyses heme b + (2E,6E)-farnesyl diphosphate + H2O = Fe(II)-heme o + diphosphate. It functions in the pathway porphyrin-containing compound metabolism; heme O biosynthesis; heme O from protoheme: step 1/1. Converts heme B (protoheme IX) to heme O by substitution of the vinyl group on carbon 2 of heme B porphyrin ring with a hydroxyethyl farnesyl side group. The polypeptide is Protoheme IX farnesyltransferase (Nostoc sp. (strain PCC 7120 / SAG 25.82 / UTEX 2576)).